The sequence spans 304 residues: UDP-3-O-acyl-N-acetylglucosamine deacetylase (304 aa).

Histidine 78, histidine 237, and aspartate 241 together coordinate Zn(2+). Catalysis depends on histidine 264, which acts as the Proton donor.

This sequence belongs to the LpxC family. Zn(2+) serves as cofactor.

The enzyme catalyses a UDP-3-O-[(3R)-3-hydroxyacyl]-N-acetyl-alpha-D-glucosamine + H2O = a UDP-3-O-[(3R)-3-hydroxyacyl]-alpha-D-glucosamine + acetate. It functions in the pathway glycolipid biosynthesis; lipid IV(A) biosynthesis; lipid IV(A) from (3R)-3-hydroxytetradecanoyl-[acyl-carrier-protein] and UDP-N-acetyl-alpha-D-glucosamine: step 2/6. Functionally, catalyzes the hydrolysis of UDP-3-O-myristoyl-N-acetylglucosamine to form UDP-3-O-myristoylglucosamine and acetate, the committed step in lipid A biosynthesis. The chain is UDP-3-O-acyl-N-acetylglucosamine deacetylase from Polynucleobacter necessarius subsp. necessarius (strain STIR1).